The sequence spans 120 residues: Ribosome-binding factor A (120 aa).

Belongs to the RbfA family. Monomer. Binds 30S ribosomal subunits, but not 50S ribosomal subunits or 70S ribosomes.

The protein resides in the cytoplasm. Functionally, one of several proteins that assist in the late maturation steps of the functional core of the 30S ribosomal subunit. Associates with free 30S ribosomal subunits (but not with 30S subunits that are part of 70S ribosomes or polysomes). Required for efficient processing of 16S rRNA. May interact with the 5'-terminal helix region of 16S rRNA. This is Ribosome-binding factor A from Dictyoglomus thermophilum (strain ATCC 35947 / DSM 3960 / H-6-12).